We begin with the raw amino-acid sequence, 188 residues long: Peptidyl-tRNA hydrolase (188 aa).

A tRNA-binding site is contributed by phenylalanine 15. Histidine 20 (proton acceptor) is an active-site residue. Positions 64, 66, and 112 each coordinate tRNA.

The protein belongs to the PTH family. Monomer.

The protein localises to the cytoplasm. It catalyses the reaction an N-acyl-L-alpha-aminoacyl-tRNA + H2O = an N-acyl-L-amino acid + a tRNA + H(+). In terms of biological role, hydrolyzes ribosome-free peptidyl-tRNAs (with 1 or more amino acids incorporated), which drop off the ribosome during protein synthesis, or as a result of ribosome stalling. Its function is as follows. Catalyzes the release of premature peptidyl moieties from peptidyl-tRNA molecules trapped in stalled 50S ribosomal subunits, and thus maintains levels of free tRNAs and 50S ribosomes. This chain is Peptidyl-tRNA hydrolase, found in Borrelia recurrentis (strain A1).